The primary structure comprises 164 residues: Ecotin (164 aa).

An N-terminal signal peptide occupies residues 1-20 (MKMFVPAVVFAALASASAWA). A disulfide bridge links cysteine 72 with cysteine 109.

This sequence belongs to the protease inhibitor I11 (ecotin) family. In terms of assembly, homodimer.

Its subcellular location is the periplasm. In terms of biological role, general inhibitor of pancreatic serine proteases: inhibits chymotrypsin, trypsin, elastases, factor X, kallikrein as well as a variety of other proteases. This is Ecotin from Salmonella paratyphi A (strain ATCC 9150 / SARB42).